A 197-amino-acid polypeptide reads, in one-letter code: Ribose 1,5-bisphosphate phosphokinase PhnN (197 aa).

21 to 28 contributes to the ATP binding site; sequence GPSGAGKD.

Belongs to the ribose 1,5-bisphosphokinase family.

It carries out the reaction alpha-D-ribose 1,5-bisphosphate + ATP = 5-phospho-alpha-D-ribose 1-diphosphate + ADP. Its pathway is metabolic intermediate biosynthesis; 5-phospho-alpha-D-ribose 1-diphosphate biosynthesis; 5-phospho-alpha-D-ribose 1-diphosphate from D-ribose 5-phosphate (route II): step 3/3. In terms of biological role, catalyzes the phosphorylation of ribose 1,5-bisphosphate to 5-phospho-D-ribosyl alpha-1-diphosphate (PRPP). The protein is Ribose 1,5-bisphosphate phosphokinase PhnN of Rhizobium etli (strain CIAT 652).